The sequence spans 162 residues: uncharacterized protein (162 aa).

This is an uncharacterized protein from Rhodobacter capsulatus (Rhodopseudomonas capsulata).